A 215-amino-acid chain; its full sequence is Large ribosomal subunit protein bL25 (215 aa).

Acidic residues predominate over residues 192-202 (EEEEVEEEVAE). The tract at residues 192 to 215 (EEEEVEEEVAEPEVIKRKEEEEEE) is disordered. Over residues 204 to 215 (EVIKRKEEEEEE) the composition is skewed to basic and acidic residues.

The protein belongs to the bacterial ribosomal protein bL25 family. CTC subfamily. As to quaternary structure, part of the 50S ribosomal subunit; part of the 5S rRNA/L5/L18/L25 subcomplex. Contacts the 5S rRNA. Binds to the 5S rRNA independently of L5 and L18.

This is one of the proteins that binds to the 5S RNA in the ribosome where it forms part of the central protuberance. This Thermotoga neapolitana (strain ATCC 49049 / DSM 4359 / NBRC 107923 / NS-E) protein is Large ribosomal subunit protein bL25.